The sequence spans 626 residues: Chaperone protein HtpG (626 aa).

Positions 1-341 (MIKKEFKAES…SEDLSLNISR (341 aa)) are a; substrate-binding. The tract at residues 342–552 (EMLQHDRQLK…DGDVTIEMEK (211 aa)) is b. Residues 553–626 (ILSAMPNNQE…FTNDICKLMS (74 aa)) are c.

The protein belongs to the heat shock protein 90 family. As to quaternary structure, homodimer.

It localises to the cytoplasm. Molecular chaperone. Has ATPase activity. In Alkaliphilus metalliredigens (strain QYMF), this protein is Chaperone protein HtpG.